Consider the following 574-residue polypeptide: Acetolactate synthase large subunit (574 aa).

Glutamate 51 contributes to the thiamine diphosphate binding site. FAD contacts are provided by residues arginine 153, 261–282 (HGTY…IGVR), and 304–323 (DIDP…IVGN). The interval 397–477 (QHQMFAALYY…ILILNLNNKS (81 aa)) is thiamine pyrophosphate binding. Mg(2+)-binding residues include aspartate 448 and asparagine 475.

Belongs to the TPP enzyme family. Dimer of large and small chains. Mg(2+) serves as cofactor. Thiamine diphosphate is required as a cofactor.

It carries out the reaction 2 pyruvate + H(+) = (2S)-2-acetolactate + CO2. It functions in the pathway amino-acid biosynthesis; L-isoleucine biosynthesis; L-isoleucine from 2-oxobutanoate: step 1/4. Its pathway is amino-acid biosynthesis; L-valine biosynthesis; L-valine from pyruvate: step 1/4. The polypeptide is Acetolactate synthase large subunit (ilvI) (Buchnera aphidicola subsp. Schlechtendalia chinensis).